The primary structure comprises 340 residues: Glutaminase 2 (340 aa).

S89, N140, N191, Y215, and Y267 together coordinate substrate.

This sequence belongs to the glutaminase family. In terms of assembly, homotetramer.

The catalysed reaction is L-glutamine + H2O = L-glutamate + NH4(+). The polypeptide is Glutaminase 2 (Yersinia pestis).